The chain runs to 137 residues: Fluoride-specific ion channel FluC 4 (137 aa).

4 consecutive transmembrane segments (helical) span residues 20 to 40, 43 to 63, 83 to 103, and 110 to 130; these read AAIG…ILGA, LWGT…FATL, GLCG…LLVL, and ALAY…LGLI. Positions 86 and 89 each coordinate Na(+).

It belongs to the fluoride channel Fluc/FEX (TC 1.A.43) family.

It localises to the cell inner membrane. The enzyme catalyses fluoride(in) = fluoride(out). With respect to regulation, na(+) is not transported, but it plays an essential structural role and its presence is essential for fluoride channel function. Fluoride-specific ion channel. Important for reducing fluoride concentration in the cell, thus reducing its toxicity. In Brucella suis biovar 1 (strain 1330), this protein is Fluoride-specific ion channel FluC 4.